We begin with the raw amino-acid sequence, 122 residues long: Small ribosomal subunit protein bS6 (122 aa).

The interval 96-122 (ETAPSPMMKAVQKEDAAKSHRTEAPAA) is disordered. The segment covering 106-122 (VQKEDAAKSHRTEAPAA) has biased composition (basic and acidic residues).

The protein belongs to the bacterial ribosomal protein bS6 family.

In terms of biological role, binds together with bS18 to 16S ribosomal RNA. The sequence is that of Small ribosomal subunit protein bS6 from Herminiimonas arsenicoxydans.